Here is a 316-residue protein sequence, read N- to C-terminus: tRNA dimethylallyltransferase (316 aa).

17-24 contacts ATP; the sequence is GPTASGKT. 19–24 contributes to the substrate binding site; it reads TASGKT. Interaction with substrate tRNA stretches follow at residues 42-45, 166-170, 247-252, and 280-287; these read DSAL, QRLSR, RCVGYR, and KRQITWLR.

It belongs to the IPP transferase family. In terms of assembly, monomer. It depends on Mg(2+) as a cofactor.

The enzyme catalyses adenosine(37) in tRNA + dimethylallyl diphosphate = N(6)-dimethylallyladenosine(37) in tRNA + diphosphate. Catalyzes the transfer of a dimethylallyl group onto the adenine at position 37 in tRNAs that read codons beginning with uridine, leading to the formation of N6-(dimethylallyl)adenosine (i(6)A). The sequence is that of tRNA dimethylallyltransferase from Escherichia coli O6:K15:H31 (strain 536 / UPEC).